Consider the following 89-residue polypeptide: Small ribosomal subunit protein uS14 (89 aa).

Belongs to the universal ribosomal protein uS14 family. Part of the 30S ribosomal subunit. Contacts proteins S3 and S10.

Binds 16S rRNA, required for the assembly of 30S particles and may also be responsible for determining the conformation of the 16S rRNA at the A site. This is Small ribosomal subunit protein uS14 from Aster yellows witches'-broom phytoplasma (strain AYWB).